A 104-amino-acid polypeptide reads, in one-letter code: Integration host factor subunit beta (104 aa).

Belongs to the bacterial histone-like protein family. In terms of assembly, heterodimer of an alpha and a beta chain.

In terms of biological role, this protein is one of the two subunits of integration host factor, a specific DNA-binding protein that functions in genetic recombination as well as in transcriptional and translational control. The sequence is that of Integration host factor subunit beta (ihfB) from Xylella fastidiosa (strain 9a5c).